The chain runs to 229 residues: Endonuclease V (229 aa).

2 residues coordinate Mg(2+): Asp-43 and Asp-111.

This sequence belongs to the endonuclease V family. Mg(2+) serves as cofactor.

Its subcellular location is the cytoplasm. It carries out the reaction Endonucleolytic cleavage at apurinic or apyrimidinic sites to products with a 5'-phosphate.. Its function is as follows. DNA repair enzyme involved in the repair of deaminated bases. Selectively cleaves double-stranded DNA at the second phosphodiester bond 3' to a deoxyinosine leaving behind the intact lesion on the nicked DNA. The protein is Endonuclease V of Rippkaea orientalis (strain PCC 8801 / RF-1) (Cyanothece sp. (strain PCC 8801)).